A 551-amino-acid chain; its full sequence is E3 ubiquitin-protein ligase TRIM8 (551 aa).

Residues 15-56 form an RING-type zinc finger; that stretch reads CPICLHVFVEPVQLPCKHNFCRGCIGEAWAKDSGLVRCPECN. 2 consecutive B box-type zinc fingers follow at residues 92 to 132 and 140 to 182; these read CVFC…ARGH and VRAW…VCDV. A coiled-coil region spans residues 181–249; the sequence is DVEIRRNEIR…HQLLDEDLRQ (69 aa).

This sequence belongs to the TRIM/RBCC family. Homodimer. Interacts with SOCS1 (via) SH2 domain and SOCS box. Interacts with HSP90AB1; prevents nucleus translocation of phosphorylated STAT3 and HSP90AB1. Interacts with MAP3K7/TAK1. Interacts with PIAS3. Interacts with TICAM1. Interacts with TRIM15; this interaction prevents TRIM8 cytoplasmic translocation. In terms of tissue distribution, widely expressed. Expressed in glomerular podocytes of kidneys.

The protein resides in the cytoplasm. It is found in the nucleus. It localises to the nuclear body. It catalyses the reaction S-ubiquitinyl-[E2 ubiquitin-conjugating enzyme]-L-cysteine + [acceptor protein]-L-lysine = [E2 ubiquitin-conjugating enzyme]-L-cysteine + N(6)-ubiquitinyl-[acceptor protein]-L-lysine.. It participates in protein modification; protein ubiquitination. In terms of biological role, E3 ubiquitin-protein ligase that participates in multiple biological processes including cell survival, differentiation, apoptosis, and in particular, the innate immune response. Participates in the activation of interferon-gamma signaling by promoting proteasomal degradation of the repressor SOCS1. Plays a positive role in the TNFalpha and IL-1beta signaling pathways. Mechanistically, induces the 'Lys-63'-linked polyubiquitination of MAP3K7/TAK1 component leading to the activation of NF-kappa-B. Also modulates STAT3 activity through negative regulation of PIAS3, either by degradation of PIAS3 through the ubiquitin-proteasome pathway or exclusion of PIAS3 from the nucleus. Negatively regulates TLR3/4-mediated innate immune response by catalyzing 'Lys-6'- and 'Lys-33'-linked polyubiquitination of TICAM1 and thereby disrupting the TICAM1-TBK1 interaction. In Homo sapiens (Human), this protein is E3 ubiquitin-protein ligase TRIM8 (TRIM8).